A 702-amino-acid chain; its full sequence is Elongation factor G 1 (702 aa).

Residues 8–290 (ERYRNIGISA…AVIDFLPSPV (283 aa)) form the tr-type G domain. Residues 17 to 24 (AHIDAGKT), 88 to 92 (DTPGH), and 142 to 145 (NKMD) each bind GTP.

The protein belongs to the TRAFAC class translation factor GTPase superfamily. Classic translation factor GTPase family. EF-G/EF-2 subfamily.

It localises to the cytoplasm. Catalyzes the GTP-dependent ribosomal translocation step during translation elongation. During this step, the ribosome changes from the pre-translocational (PRE) to the post-translocational (POST) state as the newly formed A-site-bound peptidyl-tRNA and P-site-bound deacylated tRNA move to the P and E sites, respectively. Catalyzes the coordinated movement of the two tRNA molecules, the mRNA and conformational changes in the ribosome. This is Elongation factor G 1 from Cupriavidus pinatubonensis (strain JMP 134 / LMG 1197) (Cupriavidus necator (strain JMP 134)).